The sequence spans 216 residues: Cyclo(L-leucyl-L-leucyl) synthase (216 aa).

S14 acts as the Nucleophile in catalysis. Residues N17, 155–159 (YIFDE), and Y179 contribute to the substrate site.

Belongs to the CDPS family.

The enzyme catalyses 2 L-leucyl-tRNA(Leu) = cyclo(L-leucyl-L-leucyl) + 2 tRNA(Leu) + 2 H(+). It uses activated amino acids in the form of aminoacyl-tRNAs (aa-tRNAs) as substrates to catalyze the ATP-independent formation of cyclodipeptides which are intermediates in diketopiperazine (DKP) biosynthetic pathways. Catalyzes the formation of cyclo(L-Leu-L-Leu) (cLL) from L-leucyl-tRNA(Leu). Can incorporate various nonpolar residues, such as L-leucine and L-methionine, into cyclodipeptides. This is Cyclo(L-leucyl-L-leucyl) synthase from Corynebacterium jeikeium (strain K411).